The sequence spans 238 residues: 1-(5-phosphoribosyl)-5-[(5-phosphoribosylamino)methylideneamino] imidazole-4-carboxamide isomerase (238 aa).

Catalysis depends on Asp8, which acts as the Proton acceptor. The Proton donor role is filled by Asp129.

The protein belongs to the HisA/HisF family.

The protein localises to the cytoplasm. The catalysed reaction is 1-(5-phospho-beta-D-ribosyl)-5-[(5-phospho-beta-D-ribosylamino)methylideneamino]imidazole-4-carboxamide = 5-[(5-phospho-1-deoxy-D-ribulos-1-ylimino)methylamino]-1-(5-phospho-beta-D-ribosyl)imidazole-4-carboxamide. It functions in the pathway amino-acid biosynthesis; L-histidine biosynthesis; L-histidine from 5-phospho-alpha-D-ribose 1-diphosphate: step 4/9. The protein is 1-(5-phosphoribosyl)-5-[(5-phosphoribosylamino)methylideneamino] imidazole-4-carboxamide isomerase of Paracoccus denitrificans (strain Pd 1222).